The sequence spans 379 residues: Chaperone protein DnaJ (379 aa).

The J domain maps to 7–72; that stretch reads CYYETLEVDR…DKRAAYDRYG (66 aa). The CR-type zinc-finger motif lies at 135-213; the sequence is GKTAQIEIPV…CSGAGRIERE (79 aa). Residues cysteine 148, cysteine 151, cysteine 165, cysteine 168, cysteine 187, cysteine 190, cysteine 201, and cysteine 204 each coordinate Zn(2+). 4 CXXCXGXG motif repeats span residues 148–155, 165–172, 187–194, and 201–208; these read CESCSGTG, CSMCGGAG, CPGCQGRG, and CPACSGAG.

This sequence belongs to the DnaJ family. As to quaternary structure, homodimer. Requires Zn(2+) as cofactor.

It is found in the cytoplasm. Functionally, participates actively in the response to hyperosmotic and heat shock by preventing the aggregation of stress-denatured proteins and by disaggregating proteins, also in an autonomous, DnaK-independent fashion. Unfolded proteins bind initially to DnaJ; upon interaction with the DnaJ-bound protein, DnaK hydrolyzes its bound ATP, resulting in the formation of a stable complex. GrpE releases ADP from DnaK; ATP binding to DnaK triggers the release of the substrate protein, thus completing the reaction cycle. Several rounds of ATP-dependent interactions between DnaJ, DnaK and GrpE are required for fully efficient folding. Also involved, together with DnaK and GrpE, in the DNA replication of plasmids through activation of initiation proteins. This is Chaperone protein DnaJ from Rhodopseudomonas palustris (strain BisB18).